The sequence spans 343 residues: CCN family member 3 (343 aa).

Residues 1 to 18 (MTPHLALCFILLIQQVAS) form the signal peptide. An IGFBP N-terminal domain is found at 19–90 (QKCPSQCDQC…RMETGTCMAL (72 aa)). Disulfide bonds link Cys21/Cys46, Cys25/Cys48, Cys28/Cys49, Cys35/Cys52, Cys60/Cys74, and Cys66/Cys87. In terms of domain architecture, VWFC spans 93-159 (NSCVFDGVVY…GECCEKWVCD (67 aa)). A TSP type-1 domain is found at 190–235 (ACIAQTTEWSACSKTCGMGVSSRVTNRNARCEMQKQIRLCMVRSCE). 5 disulfides stabilise this stretch: Cys249-Cys286, Cys266-Cys300, Cys277-Cys316, Cys280-Cys318, and Cys285-Cys322. The CTCK domain maps to 249–323 (CVRVRKTTKP…STCVCHYNCP (75 aa)). Asn265 is a glycosylation site (N-linked (GlcNAc...) asparagine).

This sequence belongs to the CCN family.

It localises to the secreted. Its subcellular location is the cytoplasm. The protein localises to the cell junction. It is found in the gap junction. In terms of biological role, immediate-early protein playing a role in various cellular processes including proliferation, adhesion, migration, differentiation and survival. Acts by binding to integrins or membrane receptors such as NOTCH1. The chain is CCN family member 3 (ccn3) from Xenopus laevis (African clawed frog).